A 104-amino-acid polypeptide reads, in one-letter code: Large ribosomal subunit protein uL24 (104 aa).

It belongs to the universal ribosomal protein uL24 family. In terms of assembly, part of the 50S ribosomal subunit.

Functionally, one of two assembly initiator proteins, it binds directly to the 5'-end of the 23S rRNA, where it nucleates assembly of the 50S subunit. In terms of biological role, one of the proteins that surrounds the polypeptide exit tunnel on the outside of the subunit. In Clostridium botulinum (strain Eklund 17B / Type B), this protein is Large ribosomal subunit protein uL24.